A 204-amino-acid chain; its full sequence is Recombination protein RecR (204 aa).

Residues 58 to 75 (CSICQNVTDRDADPCRIC) form a C4-type zinc finger. The Toprim domain occupies 83-181 (SVICVVESPV…MVTKIARGIP (99 aa)).

The protein belongs to the RecR family.

Its function is as follows. May play a role in DNA repair. It seems to be involved in an RecBC-independent recombinational process of DNA repair. It may act with RecF and RecO. In Chlorobium phaeovibrioides (strain DSM 265 / 1930) (Prosthecochloris vibrioformis (strain DSM 265)), this protein is Recombination protein RecR.